The following is a 346-amino-acid chain: MKTDDFDFSLPNELIAQLPLANRADSRMLYINSRQSDLRDAAFKDLPAYLKQGDVIVFNNTRVVKARLAGFKSTGGKVEVMIERILGTHQARALIRASHAPAIGSTLLLENAITVQVEAREQDIYTLRFIHSQPLIELLDQYGHTPLPPYIGRIATASDESRYQTVFAQETGAVAAPTAGLHFDETMLTTLQTLGIKIAWVTLHVGAGTFQPVRVENINQHIMHTEQYHIPTETIEIIRRCKAGGGSVLAVGTTSLRALEASALIGDGELVAGSNETNLFITPGFQFRVVDRLLTNFHLPRSTLLMLVSAFAGIETIRHAYQHAVNNHYRFFSYGDAMLIEGDSRS.

The protein belongs to the QueA family. In terms of assembly, monomer.

It localises to the cytoplasm. It carries out the reaction 7-aminomethyl-7-carbaguanosine(34) in tRNA + S-adenosyl-L-methionine = epoxyqueuosine(34) in tRNA + adenine + L-methionine + 2 H(+). It participates in tRNA modification; tRNA-queuosine biosynthesis. In terms of biological role, transfers and isomerizes the ribose moiety from AdoMet to the 7-aminomethyl group of 7-deazaguanine (preQ1-tRNA) to give epoxyqueuosine (oQ-tRNA). The polypeptide is S-adenosylmethionine:tRNA ribosyltransferase-isomerase (Nitrosomonas eutropha (strain DSM 101675 / C91 / Nm57)).